Consider the following 1241-residue polypeptide: Sterol 3-beta-glucosyltransferase (1241 aa).

Over residues 1–11 the composition is skewed to acidic residues; that stretch reads MSGIESTEEPC. Disordered regions lie at residues 1–97 and 124–189; these read MSGI…KPSI and DQQV…TLRK. Basic and acidic residues predominate over residues 25–34; it reads PEERQTRKDS. Residues 136–155 show a composition bias toward acidic residues; that stretch reads ESEDQQADESSDEQEDDDQD. The GRAM 1 domain maps to 220–267; it reads NKLKRTFDISDTDVFISDYPCWLMGDVLLQGHLYITKHHILFFAFLPK. Residues 271–373 enclose the PH domain; that stretch reads SISKSGALTT…WVSSLKKHIF (103 aa). The interval 499-556 is disordered; that stretch reads DDFSQEQESAESSKPVSDDEIVSADDNQELEEKQPQDNLANAEKENHDKVSRANSRRT. The span at 516-527 shows a compositional bias: acidic residues; that stretch reads DDEIVSADDNQE. A compositionally biased stretch (basic and acidic residues) spans 540–549; it reads AEKENHDKVS. The GRAM 2 domain occupies 609–675; that stretch reads ERFRKHFSLT…SDIENVNKEK (67 aa). The disordered stretch occupies residues 720–741; the sequence is KGSTDSSPPNASEGSSDESCNL. The span at 723–741 shows a compositional bias: polar residues; that stretch reads TDSSPPNASEGSSDESCNL. Residues Ser797, Arg798, Asp800, Asn1071, Val1098, His1100, His1113, Ser1116, Gly1117, Thr1118, Asp1137, and Gln1138 each coordinate UDP-alpha-D-glucose.

Belongs to the glycosyltransferase 28 family.

The protein localises to the cytoplasm. Its subcellular location is the preautophagosomal structure membrane. It catalyses the reaction a sterol + UDP-alpha-D-glucose = a sterol 3-beta-D-glucoside + UDP + H(+). The enzyme catalyses ergosterol + UDP-alpha-D-glucose = ergosteryl 3-beta-D-glucoside + UDP + H(+). Functionally, sterol glycosyltransferase responsible for the glycosylation of ergosterol to form ergosterol-glucoside. Mediates autophagic degradation of peroxisomes (pexophagy). The polypeptide is Sterol 3-beta-glucosyltransferase (Pichia angusta (Yeast)).